A 141-amino-acid polypeptide reads, in one-letter code: Large ribosomal subunit protein uL11 (141 aa).

It belongs to the universal ribosomal protein uL11 family. As to quaternary structure, part of the ribosomal stalk of the 50S ribosomal subunit. Interacts with L10 and the large rRNA to form the base of the stalk. L10 forms an elongated spine to which L12 dimers bind in a sequential fashion forming a multimeric L10(L12)X complex. In terms of processing, one or more lysine residues are methylated.

Forms part of the ribosomal stalk which helps the ribosome interact with GTP-bound translation factors. The sequence is that of Large ribosomal subunit protein uL11 from Streptococcus uberis (strain ATCC BAA-854 / 0140J).